Here is a 439-residue protein sequence, read N- to C-terminus: Aspartate--tRNA(Asp/Asn) ligase (439 aa).

Glu-177 contacts L-aspartate. The aspartate stretch occupies residues 199-202; the sequence is QLYK. An L-aspartate-binding site is contributed by Arg-221. ATP contacts are provided by residues 221-223, 229-231, and Glu-362; these read RAE and RHL. 2 residues coordinate Mg(2+): Glu-362 and Ser-365. L-aspartate is bound by residues Ser-365 and Arg-369. An ATP-binding site is contributed by 410 to 413; the sequence is GADR.

It belongs to the class-II aminoacyl-tRNA synthetase family. Type 2 subfamily. Homodimer. It depends on Mg(2+) as a cofactor.

Its subcellular location is the cytoplasm. The catalysed reaction is tRNA(Asx) + L-aspartate + ATP = L-aspartyl-tRNA(Asx) + AMP + diphosphate. In terms of biological role, aspartyl-tRNA synthetase with relaxed tRNA specificity since it is able to aspartylate not only its cognate tRNA(Asp) but also tRNA(Asn). Reaction proceeds in two steps: L-aspartate is first activated by ATP to form Asp-AMP and then transferred to the acceptor end of tRNA(Asp/Asn). The sequence is that of Aspartate--tRNA(Asp/Asn) ligase from Methanosphaera stadtmanae (strain ATCC 43021 / DSM 3091 / JCM 11832 / MCB-3).